A 1322-amino-acid polypeptide reads, in one-letter code: Putative DNA ligase 4 (1322 aa).

Residues E265, K267, R272, R287, E317, F387, E497, K502, R513, K519, and K521 each coordinate ATP. K267 (N6-AMP-lysine intermediate) is an active-site residue. E317 contacts Mg(2+). E497 is a binding site for Mg(2+). BRCT domains are found at residues 686–768 (LDVQ…PKFD) and 825–935 (ERFC…TYSL). 2 disordered regions span residues 945–1212 (IERS…SATC) and 1245–1310 (AEAK…KKVS). Over residues 957–969 (DKLEENEKADTSH) the composition is skewed to basic and acidic residues. Basic residues-rich tracts occupy residues 970–979 (VKHAPRKRGR) and 994–1005 (PVRRTRARRGNQ). 2 stretches are compositionally biased toward basic and acidic residues: residues 1007 to 1022 (AKIDDVEPEESDHGET) and 1033 to 1047 (NISKMEVDSFDKDQV). Basic residues predominate over residues 1051–1063 (PVRRTRARRGKQH). Basic and acidic residues-rich tracts occupy residues 1082-1104 (DDQRLDADYISKMEEDSSDRDQG), 1125-1161 (AKIDRETGPGETGQDDKKLNADSISKMEEHAHDKDQE), and 1190-1204 (PKHERNQTVLRRDTA). A compositionally biased stretch (low complexity) spans 1261–1288 (SSYVAPVPQASASSASSSGVPAPHAGSS).

It belongs to the ATP-dependent DNA ligase family. Mg(2+) serves as cofactor.

The protein resides in the nucleus. It carries out the reaction ATP + (deoxyribonucleotide)n-3'-hydroxyl + 5'-phospho-(deoxyribonucleotide)m = (deoxyribonucleotide)n+m + AMP + diphosphate.. In terms of biological role, DNA ligase involved in DNA non-homologous end joining (NHEJ); required for double-strand break (DSB) repair. This Oryza sativa subsp. japonica (Rice) protein is Putative DNA ligase 4 (LIG4).